The following is a 315-amino-acid chain: uncharacterized protein (315 aa).

Polar residues predominate over residues Met1–Met23. Residues Met1–Ser31 are disordered.

This is an uncharacterized protein from Acanthamoeba polyphaga mimivirus (APMV).